The following is an 88-amino-acid chain: Small ribosomal subunit protein uS15 (88 aa).

Belongs to the universal ribosomal protein uS15 family. As to quaternary structure, part of the 30S ribosomal subunit. Forms a bridge to the 50S subunit in the 70S ribosome, contacting the 23S rRNA.

Functionally, one of the primary rRNA binding proteins, it binds directly to 16S rRNA where it helps nucleate assembly of the platform of the 30S subunit by binding and bridging several RNA helices of the 16S rRNA. Its function is as follows. Forms an intersubunit bridge (bridge B4) with the 23S rRNA of the 50S subunit in the ribosome. The sequence is that of Small ribosomal subunit protein uS15 from Mycoplasma capricolum subsp. capricolum (strain California kid / ATCC 27343 / NCTC 10154).